The primary structure comprises 201 residues: Transgelin (201 aa).

N-acetylalanine is present on Ala-2. Residues 24–137 (EELEERLVEW…RTLMALGSLA (114 aa)) enclose the Calponin-homology (CH) domain. Phosphoserine is present on Ser-166. N6-acetyllysine is present on Lys-172. Residues 175 to 200 (IGLQMGSNRGASQAGMTGYGRPRQII) form a Calponin-like repeat. Position 181 is a phosphoserine (Ser-181). Arg-183 is modified (omega-N-methylarginine).

It belongs to the calponin family.

The protein resides in the cytoplasm. In terms of biological role, actin cross-linking/gelling protein. The polypeptide is Transgelin (Tagln) (Mus musculus (Mouse)).